Reading from the N-terminus, the 191-residue chain is Endoribonuclease YbeY (191 aa).

Zn(2+) is bound by residues His122, His126, and His132. Positions 164–191 (QPKPSGPKAFPDAAERAELDKEVPGGGI) are disordered. Positions 176 to 191 (AAERAELDKEVPGGGI) are enriched in basic and acidic residues.

Belongs to the endoribonuclease YbeY family. Zn(2+) is required as a cofactor.

It localises to the cytoplasm. Single strand-specific metallo-endoribonuclease involved in late-stage 70S ribosome quality control and in maturation of the 3' terminus of the 16S rRNA. This Corynebacterium aurimucosum (strain ATCC 700975 / DSM 44827 / CIP 107346 / CN-1) (Corynebacterium nigricans) protein is Endoribonuclease YbeY.